A 158-amino-acid polypeptide reads, in one-letter code: MKPRHRRLTLIALVLGGLGLSAGLALTAFQDNLVFFFTPSEVMAREAPIDRPIRIGGLVKAGSVEREAASARVHFKVTDTAESITVSYDGILPDLFREGQGVVAQGRLGADGRFHATQVLARHDETYMPAEAKEALDRIGQGNGTPGPDGHPETTTAY.

The Cytoplasmic portion of the chain corresponds to 1–7; it reads MKPRHRR. Residues 8 to 28 form a helical; Signal-anchor for type II membrane protein membrane-spanning segment; the sequence is LTLIALVLGGLGLSAGLALTA. Over 29 to 158 the chain is Periplasmic; the sequence is FQDNLVFFFT…DGHPETTTAY (130 aa). His123 and Tyr127 together coordinate heme. The segment at 138-158 is disordered; that stretch reads RIGQGNGTPGPDGHPETTTAY.

This sequence belongs to the CcmE/CycJ family.

It localises to the cell inner membrane. Functionally, heme chaperone required for the biogenesis of c-type cytochromes. Transiently binds heme delivered by CcmC and transfers the heme to apo-cytochromes in a process facilitated by CcmF and CcmH. In Alkalilimnicola ehrlichii (strain ATCC BAA-1101 / DSM 17681 / MLHE-1), this protein is Cytochrome c-type biogenesis protein CcmE.